Reading from the N-terminus, the 307-residue chain is Cytochrome f (307 aa).

Residues 1 to 24 (MKKNLFLVSVFASLFVGTANNALA) form the signal peptide. The heme site is built by Y25, C45, C48, and H49. The helical transmembrane segment at 273 to 293 (LQGLVIFLGFVLIAQVFLVLK) threads the bilayer.

Belongs to the cytochrome f family. In terms of assembly, the 4 large subunits of the cytochrome b6-f complex are cytochrome b6, subunit IV (17 kDa polypeptide, petD), cytochrome f and the Rieske protein, while the 4 small subunits are PetG, PetL, PetM and PetN. The complex functions as a dimer. It depends on heme as a cofactor.

The protein localises to the plastid. The protein resides in the chloroplast thylakoid membrane. Its function is as follows. Component of the cytochrome b6-f complex, which mediates electron transfer between photosystem II (PSII) and photosystem I (PSI), cyclic electron flow around PSI, and state transitions. This Ostreococcus tauri protein is Cytochrome f.